A 377-amino-acid polypeptide reads, in one-letter code: Chaperone protein DnaJ (377 aa).

In terms of domain architecture, J spans 5–70 (DYYEVLGVGR…NKKAAYDQFG (66 aa)). The CR-type zinc finger occupies 133–211 (GLTKELRIPT…CHGDGRVEKT (79 aa)). Zn(2+) is bound by residues C146, C149, C163, C166, C185, C188, C199, and C202. 4 CXXCXGXG motif repeats span residues 146–153 (CDVCDGSG), 163–170 (CGTCHGQG), 185–192 (CPTCHGRG), and 199–206 (CTKCHGDG).

It belongs to the DnaJ family. As to quaternary structure, homodimer. Zn(2+) serves as cofactor.

It is found in the cytoplasm. Functionally, participates actively in the response to hyperosmotic and heat shock by preventing the aggregation of stress-denatured proteins and by disaggregating proteins, also in an autonomous, DnaK-independent fashion. Unfolded proteins bind initially to DnaJ; upon interaction with the DnaJ-bound protein, DnaK hydrolyzes its bound ATP, resulting in the formation of a stable complex. GrpE releases ADP from DnaK; ATP binding to DnaK triggers the release of the substrate protein, thus completing the reaction cycle. Several rounds of ATP-dependent interactions between DnaJ, DnaK and GrpE are required for fully efficient folding. Also involved, together with DnaK and GrpE, in the DNA replication of plasmids through activation of initiation proteins. The chain is Chaperone protein DnaJ from Shewanella sp. (strain MR-4).